The primary structure comprises 137 residues: Large ribosomal subunit protein uL16 (137 aa).

This sequence belongs to the universal ribosomal protein uL16 family. In terms of assembly, part of the 50S ribosomal subunit.

In terms of biological role, binds 23S rRNA and is also seen to make contacts with the A and possibly P site tRNAs. The sequence is that of Large ribosomal subunit protein uL16 from Pseudomonas entomophila (strain L48).